Consider the following 297-residue polypeptide: Phosphoribosylaminoimidazole-succinocarboxamide synthase (297 aa).

The protein belongs to the SAICAR synthetase family.

The catalysed reaction is 5-amino-1-(5-phospho-D-ribosyl)imidazole-4-carboxylate + L-aspartate + ATP = (2S)-2-[5-amino-1-(5-phospho-beta-D-ribosyl)imidazole-4-carboxamido]succinate + ADP + phosphate + 2 H(+). It functions in the pathway purine metabolism; IMP biosynthesis via de novo pathway; 5-amino-1-(5-phospho-D-ribosyl)imidazole-4-carboxamide from 5-amino-1-(5-phospho-D-ribosyl)imidazole-4-carboxylate: step 1/2. The protein is Phosphoribosylaminoimidazole-succinocarboxamide synthase of Mycobacterium tuberculosis (strain ATCC 25177 / H37Ra).